Reading from the N-terminus, the 229-residue chain is uncharacterized protein (229 aa).

A run of 7 helical transmembrane segments spans residues 1–21 (MFGTIFNTVMIIAGSIIGGIF), 32–52 (ILMQAMGFAAVALGINAITQH), 58–78 (YPILFIVSLAIGGLLGQIINL), 100–120 (TAVLLFCIGSLSILGPVEAAL), 139–159 (IVLASTFGFGIAAAALVLFSW), 178–198 (LINEITIVGGILILSSGLSIL), and 206–226 (LNLLPSLLIPPVVIFVIHAFG).

It is found in the cell membrane. This is an uncharacterized protein from Bacillus subtilis (strain 168).